The primary structure comprises 745 residues: Fatty acid oxidation complex subunit alpha (745 aa).

The interval Val47–Pro209 is enoyl-CoA hydratase. A 3-hydroxyacyl-CoA dehydrogenase region spans residues Arg325 to Asn745.

In the N-terminal section; belongs to the enoyl-CoA hydratase/isomerase family. It in the central section; belongs to the 3-hydroxyacyl-CoA dehydrogenase family. As to quaternary structure, heterotetramer of two alpha chains (FadJ) and two beta chains (FadI).

The protein resides in the cytoplasm. The enzyme catalyses a (3S)-3-hydroxyacyl-CoA = a (2E)-enoyl-CoA + H2O. It catalyses the reaction a 4-saturated-(3S)-3-hydroxyacyl-CoA = a (3E)-enoyl-CoA + H2O. The catalysed reaction is a (3S)-3-hydroxyacyl-CoA + NAD(+) = a 3-oxoacyl-CoA + NADH + H(+). It carries out the reaction (3S)-3-hydroxybutanoyl-CoA = (3R)-3-hydroxybutanoyl-CoA. It functions in the pathway lipid metabolism; fatty acid beta-oxidation. Its function is as follows. Catalyzes the formation of a hydroxyacyl-CoA by addition of water on enoyl-CoA. Also exhibits 3-hydroxyacyl-CoA epimerase and 3-hydroxyacyl-CoA dehydrogenase activities. The sequence is that of Fatty acid oxidation complex subunit alpha from Yersinia enterocolitica serotype O:8 / biotype 1B (strain NCTC 13174 / 8081).